The primary structure comprises 31 residues: Cyclotide hyen-I (31 aa).

Residues 1–31 (GSTPCGESCVWIPCISGIVGCSCSNKVCYMD) constitute a cross-link (cyclopeptide (Gly-Asp)). Intrachain disulfides connect cysteine 5/cysteine 21, cysteine 9/cysteine 23, and cysteine 14/cysteine 28.

In terms of processing, this is a cyclic peptide. In terms of tissue distribution, detected in seeds (at protein level).

Probably participates in a plant defense mechanism. The polypeptide is Cyclotide hyen-I (Pigea enneasperma (Spade flower)).